We begin with the raw amino-acid sequence, 166 residues long: MSDKIGLYSGSFDPVTNGHMDIIARASQLFDHLYIGVFFNPEKKGFFDLETRINVLKEALVDYPNISVVSAADSLAVDLAKSLGVTHMVRGLRNPTDFEYESNLEFFNNRLDPSIDTIYFIAHNLMQPISSSRVKELIHFNSSIEGLVPQSVIKQLESMNESNQNL.

Serine 11 provides a ligand contact to substrate. ATP contacts are provided by residues 11–12 and histidine 19; that span reads SF. Substrate is bound by residues lysine 43, alanine 76, and arginine 90. ATP contacts are provided by residues 91-93, glutamate 101, and 126-132; these read GLR and MQPISSS.

Belongs to the bacterial CoaD family. In terms of assembly, homohexamer. Requires Mg(2+) as cofactor.

Its subcellular location is the cytoplasm. It carries out the reaction (R)-4'-phosphopantetheine + ATP + H(+) = 3'-dephospho-CoA + diphosphate. Its pathway is cofactor biosynthesis; coenzyme A biosynthesis; CoA from (R)-pantothenate: step 4/5. Its function is as follows. Reversibly transfers an adenylyl group from ATP to 4'-phosphopantetheine, yielding dephospho-CoA (dPCoA) and pyrophosphate. This Streptococcus uberis (strain ATCC BAA-854 / 0140J) protein is Phosphopantetheine adenylyltransferase.